We begin with the raw amino-acid sequence, 86 residues long: DNA-directed RNA polymerase subunit omega (86 aa).

Belongs to the RNA polymerase subunit omega family. In terms of assembly, the RNAP catalytic core consists of 2 alpha, 1 beta, 1 beta' and 1 omega subunit. When a sigma factor is associated with the core the holoenzyme is formed, which can initiate transcription.

The catalysed reaction is RNA(n) + a ribonucleoside 5'-triphosphate = RNA(n+1) + diphosphate. Its function is as follows. Promotes RNA polymerase assembly. Latches the N- and C-terminal regions of the beta' subunit thereby facilitating its interaction with the beta and alpha subunits. The sequence is that of DNA-directed RNA polymerase subunit omega from Psychrobacter arcticus (strain DSM 17307 / VKM B-2377 / 273-4).